The chain runs to 303 residues: Probable phytol kinase, chloroplastic (303 aa).

The N-terminal 49 residues, 1 to 49 (MAAAAAWTGAASPNSLLLSRSPPHAAALAPSPGSSMRRRLLLGVGTPAV), are a transit peptide targeting the chloroplast. Transmembrane regions (helical) follow at residues 98 to 118 (VVHV…SNST), 122 to 144 (YFAA…RLYT), 168 to 188 (YVLV…IGIV), 227 to 247 (FISG…LGYI), 254 to 274 (ALGK…VPVT), and 276 to 296 (VVDD…LLFS).

It belongs to the polyprenol kinase family.

The protein localises to the plastid. It localises to the chloroplast membrane. It carries out the reaction phytol + CTP = phytyl phosphate + CDP + H(+). The protein operates within cofactor biosynthesis; tocopherol biosynthesis. Its function is as follows. Involved in the activation and reutilization of phytol from chlorophyll degradation in plant metabolism, including tocopherol biosynthesis. Catalyzes the conversion of phytol to phytol monophosphate (PMP). The polypeptide is Probable phytol kinase, chloroplastic (Zea mays (Maize)).